Here is a 278-residue protein sequence, read N- to C-terminus: Bis(5'-nucleosyl)-tetraphosphatase, symmetrical (278 aa).

The protein belongs to the Ap4A hydrolase family.

The catalysed reaction is P(1),P(4)-bis(5'-adenosyl) tetraphosphate + H2O = 2 ADP + 2 H(+). Functionally, hydrolyzes diadenosine 5',5'''-P1,P4-tetraphosphate to yield ADP. This is Bis(5'-nucleosyl)-tetraphosphatase, symmetrical from Methylococcus capsulatus (strain ATCC 33009 / NCIMB 11132 / Bath).